Consider the following 72-residue polypeptide: Large ribosomal subunit protein bL31c (72 aa).

This sequence belongs to the bacterial ribosomal protein bL31 family. Type A subfamily. Part of the 50S ribosomal subunit.

The protein localises to the plastid. It localises to the chloroplast. Binds the 23S rRNA. The protein is Large ribosomal subunit protein bL31c (rpl31) of Phaeodactylum tricornutum (strain CCAP 1055/1).